A 177-amino-acid polypeptide reads, in one-letter code: ATP synthase subunit delta (177 aa).

It belongs to the ATPase delta chain family. In terms of assembly, F-type ATPases have 2 components, F(1) - the catalytic core - and F(0) - the membrane proton channel. F(1) has five subunits: alpha(3), beta(3), gamma(1), delta(1), epsilon(1). F(0) has three main subunits: a(1), b(2) and c(10-14). The alpha and beta chains form an alternating ring which encloses part of the gamma chain. F(1) is attached to F(0) by a central stalk formed by the gamma and epsilon chains, while a peripheral stalk is formed by the delta and b chains.

The protein localises to the cell inner membrane. F(1)F(0) ATP synthase produces ATP from ADP in the presence of a proton or sodium gradient. F-type ATPases consist of two structural domains, F(1) containing the extramembraneous catalytic core and F(0) containing the membrane proton channel, linked together by a central stalk and a peripheral stalk. During catalysis, ATP synthesis in the catalytic domain of F(1) is coupled via a rotary mechanism of the central stalk subunits to proton translocation. In terms of biological role, this protein is part of the stalk that links CF(0) to CF(1). It either transmits conformational changes from CF(0) to CF(1) or is implicated in proton conduction. The chain is ATP synthase subunit delta from Shewanella sp. (strain MR-4).